We begin with the raw amino-acid sequence, 382 residues long: RIB43A-like with coiled-coils protein 2 (382 aa).

Residues 222–255 (NKSQAIESVERKKQEKKQEQEDNLAEITNLLRGD) are a coiled coil.

The protein belongs to the RIB43A family. In terms of assembly, microtubule inner protein component of sperm flagellar doublet microtubules. As to expression, expressed in airway epithelial cells.

The protein resides in the cytoplasm. The protein localises to the cytoskeleton. It localises to the cilium axoneme. It is found in the flagellum axoneme. In terms of biological role, microtubule inner protein (MIP) part of the dynein-decorated doublet microtubules (DMTs) in cilia axoneme, which is required for motile cilia beating. This is RIB43A-like with coiled-coils protein 2 from Homo sapiens (Human).